Reading from the N-terminus, the 444-residue chain is Cholecystokinin receptor type A (444 aa).

At 1–56 the chain is on the extracellular side; the sequence is MSHSPARQHLVESSRMDVVDSLLMNGSNITPPCELGLENETLFCLDQPQPSKEWQS. N-linked (GlcNAc...) asparagine glycans are attached at residues asparagine 25 and asparagine 39. Cysteines 33 and 44 form a disulfide. The helical transmembrane segment at 57–82 threads the bilayer; that stretch reads ALQILLYSIIFLLSVLGNTLVITVLI. Residues 83 to 92 are Cytoplasmic-facing; sequence RNKRMRTVTN. Residues 93-119 traverse the membrane as a helical segment; sequence IFLLSLAVSDLMLCLFCMPFNLIPNLL. Residues 120–130 are Extracellular-facing; the sequence is KDFIFGSAVCK. An intrachain disulfide couples cysteine 129 to cysteine 211. The helical transmembrane segment at 131 to 152 threads the bilayer; the sequence is TTTYFMGTSVSVSTFNLVAISL. Residues 153–172 are Cytoplasmic-facing; the sequence is ERYGAICRPLQSRVWQTKSH. The helical transmembrane segment at 173–193 threads the bilayer; the sequence is ALKVIAATWCLSFTIMTPYPI. The Extracellular portion of the chain corresponds to 194–225; sequence YSNLVPFTKNNNQTANMCRFLLPSDAMQQSWQ. Residue asparagine 205 is glycosylated (N-linked (GlcNAc...) asparagine). The chain crosses the membrane as a helical span at residues 226–249; it reads TFLLLILFLLPGIVMVVAYGLISL. Residues 250–329 lie on the Cytoplasmic side of the membrane; that stretch reads ELYQGIKFDA…NLIAKKRVIR (80 aa). Residues 263–288 form a disordered region; the sequence is KSAKEKKPSTGSSTRYEDSDGCYLQK. The helical transmembrane segment at 330–350 threads the bilayer; sequence MLIVIVVLFFLCWMPIFSANA. The Extracellular segment spans residues 351–365; sequence WRAYDTVSAEKHLSG. A helical membrane pass occupies residues 366–389; that stretch reads TPISFILLLSYTSSCVNPIIYCFM. At 390–444 the chain is on the cytoplasmic side; it reads NKRFRLGFMATFPCCPNPGPPGVRGEVGEEEDGRTIRALLSRYSYSHMSTSAPPP. Residue cysteine 403 is the site of S-palmitoyl cysteine attachment.

This sequence belongs to the G-protein coupled receptor 1 family. In terms of tissue distribution, pancreas and brain. Also expressed in the gastrointestinal system and vagus nerve.

The protein resides in the cell membrane. In terms of biological role, receptor for cholecystokinin. Mediates pancreatic growth and enzyme secretion, smooth muscle contraction of the gall bladder and stomach. Has a 1000-fold higher affinity for CCK rather than for gastrin. It modulates feeding and dopamine-induced behavior in the central and peripheral nervous system. This receptor mediates its action by association with G proteins that activate a phosphatidylinositol-calcium second messenger system. This Rattus norvegicus (Rat) protein is Cholecystokinin receptor type A (Cckar).